A 129-amino-acid polypeptide reads, in one-letter code: Small ribosomal subunit protein uS11 (129 aa).

This sequence belongs to the universal ribosomal protein uS11 family. In terms of assembly, part of the 30S ribosomal subunit. Interacts with proteins S7 and S18. Binds to IF-3.

Its function is as follows. Located on the platform of the 30S subunit, it bridges several disparate RNA helices of the 16S rRNA. Forms part of the Shine-Dalgarno cleft in the 70S ribosome. The protein is Small ribosomal subunit protein uS11 of Rhodopseudomonas palustris (strain BisB5).